The primary structure comprises 136 residues: EDESTVLVDNKCQCVRITSRIIRDPDNPSEDIVERNIRIIVPLNTRENISDPTSPLRTEFKYNLANLCKKCDPTEIELDNQVFTASQSNICPDDDYSETCYTYDRNKCYTTLVPITHRGGTRMVKATLTPDSCYPD.

3 disulfides stabilise this stretch: C12–C100, C71–C91, and C108–C133. Residue N48 is glycosylated (N-linked (GlcNAc...) (complex) asparagine).

As to quaternary structure, part of the secretory IgA (sIgA) complex that consists of two, four or five IgA monomers, and two additional non-Ig polypeptides, namely the JCHAIN and the secretory component (the proteolytic product of PIGR). Part of the secretory IgM (sIgM) complex that consist of five IgM monomers, and two additional non-Ig polypeptides, namely the JCHAIN and the secretory component (the proteolytic product of PIGR). JCHAIN-containing IgM interacts (via CH4 domain) with FCRM (via Ig-like domain).

It localises to the secreted. Its function is as follows. Serves to link two monomer units of either IgM or IgA. In the case of IgM, the J chain-joined dimer is a nucleating unit for the IgM pentamer, and in the case of IgA it induces dimers and/or larger polymers. It also helps to bind these immunoglobulins to secretory component. The sequence is that of Immunoglobulin J chain from Oryctolagus cuniculus (Rabbit).